The primary structure comprises 821 residues: Protein SCAR1 (821 aa).

Disordered stretches follow at residues 168 to 189 (KRAS…QRGR), 205 to 289 (TCTS…RGSS), and 577 to 625 (TSLP…RESK). Positions 206–225 (CTSLSFSGRTSTSKTASTIE) are enriched in polar residues. Residues 226–250 (IESKSDLQEHRSFSFDSRSGGEKPK) show a composition bias toward basic and acidic residues. A compositionally biased stretch (polar residues) spans 252 to 265 (VSSSSRFTPGSRTI). The span at 592–612 (SSSYISDNSDNDNRSVSMSEQ) shows a compositional bias: low complexity. In terms of domain architecture, WH2 spans 756 to 774 (EAGDFLHQIRTKQFNLRRV). A disordered region spans residues 802–821 (QAVASDDGEGESDTWSDSDT). The segment covering 807–821 (DDGEGESDTWSDSDT) has biased composition (acidic residues).

The protein belongs to the SCAR/WAVE family. As to quaternary structure, binds BRK1 and actin. Interacts with SPK1, ABI1 and ABI2. In terms of tissue distribution, expressed in expanding cotyledons, expanding leaves and expanding siliques containing developing embryos. Detected in unopened flower buds and in the expanding tip region of roots. Reduced expression in mature leaves and mature cotyledons.

It is found in the cytoplasm. The protein localises to the cytoskeleton. Functionally, involved in regulation of actin and microtubule organization. Part of a WAVE complex that activates the Arp2/3 complex. Regulates trichome branch positioning and expansion. This chain is Protein SCAR1 (SCAR1), found in Arabidopsis thaliana (Mouse-ear cress).